A 407-amino-acid chain; its full sequence is Probable protein S-acyltransferase 9 (407 aa).

Helical transmembrane passes span 28–48 and 62–82; these read WSIPFTFLLIITPVCFFSVFV and GHVFLVAGVLFTVFVLILLFL. The region spanning 136 to 179 is the DHHC domain; sequence KYCDTCMLYRPPRCSHCSICNNCVERFDHHCPWRNYRYFFMFVS. The active-site S-palmitoyl cysteine intermediate is C166. 2 helical membrane-spanning segments follow: residues 174-194 and 217-237; these read FFMFVSSATILCIYIFSMSAL and AVMLMIYCFISLWFVGGLTGF. The interval 300 to 407 is disordered; it reads LATTWERPEE…RSYAAAEEGR (108 aa). Over residues 346–356 the composition is skewed to basic and acidic residues; that stretch reads DTAHHKIDIDQ.

It belongs to the DHHC palmitoyltransferase family. In terms of tissue distribution, mainly expressed in seeds.

The protein localises to the cell membrane. The catalysed reaction is L-cysteinyl-[protein] + hexadecanoyl-CoA = S-hexadecanoyl-L-cysteinyl-[protein] + CoA. Functionally, palmitoyl acyltransferase. The protein is Probable protein S-acyltransferase 9 (PAT09) of Arabidopsis thaliana (Mouse-ear cress).